A 335-amino-acid polypeptide reads, in one-letter code: Trans-3-hydroxy-L-proline dehydratase (335 aa).

Cysteine 91 serves as the catalytic Proton acceptor. Substrate contacts are provided by residues 92–93 (GH) and 256–257 (GS).

Belongs to the proline racemase family. As to quaternary structure, homodimer.

It carries out the reaction trans-3-hydroxy-L-proline = 1-pyrroline-2-carboxylate + H2O. Its pathway is amino-acid degradation. Functionally, catalyzes the dehydration of trans-3-hydroxy-L-proline (t3LHyp) to Delta(1)-pyrroline-2-carboxylate (Pyr2C). Together with LhpI, is involved in a t3LHyp degradation pathway to L-proline, which allows A.brasilense to grow on t3LHyp as a sole carbon source. This Azospirillum brasilense protein is Trans-3-hydroxy-L-proline dehydratase.